Reading from the N-terminus, the 238-residue chain is Probable septum site-determining protein MinC (238 aa).

It belongs to the MinC family. As to quaternary structure, interacts with MinD and FtsZ.

Its function is as follows. Cell division inhibitor that blocks the formation of polar Z ring septums. Rapidly oscillates between the poles of the cell to destabilize FtsZ filaments that have formed before they mature into polar Z rings. Prevents FtsZ polymerization. In Aeromonas salmonicida (strain A449), this protein is Probable septum site-determining protein MinC.